A 2335-amino-acid chain; its full sequence is Pre-mRNA-processing-splicing factor 8 (2335 aa).

An N-acetylalanine modification is found at alanine 2. Residues 812 to 1303 (TTVHWLESRR…KIQTRIKIGL (492 aa)) are reverse transcriptase homology domain. 2 positions are modified to phosphoserine: serine 859 and serine 1358. The segment at 1304 to 1577 (NSKMPSRFPP…TLKISLIQIF (274 aa)) is linker. At lysine 1425 the chain carries N6,N6-dimethyllysine. N6-acetyllysine is present on lysine 1463. Residues 1513 to 1526 (MKWKKLTNAQRSGL) form an important for branch point selection region. The segment at 1581–1752 (LWQKIHESIV…LRERIRKGLQ (172 aa)) is restriction endonuclease homology domain. An involved in interaction with pre-mRNA 5' splice site region spans residues 1669 to 2034 (GDYDSHDIER…QIAEIEKQTK (366 aa)). The segment at 1767-2020 (NYGELFSNQI…ILGMEISAPS (254 aa)) is RNase H homology domain. An MPN domain is found at 2103–2234 (TYILPKNVLK…LTAYKLTPSG (132 aa)). The interval 2301–2335 (PKEFYHEVHRPSHFLNFALLQEGEVYSADREDLYA) is required for interaction with EFTUD2 and SNRNP200.

Part of the U5 snRNP complex. Component of the U4/U6-U5 tri-snRNP complex composed of the U4, U6 and U5 snRNAs and at least PRPF3, PRPF4, PRPF6, PRPF8, PRPF31, SNRNP200, TXNL4A, SNRNP40, DDX23, CD2BP2, PPIH, SNU13, EFTUD2, SART1 and USP39. Component of the U5.U4atac/U6atac snRNP complexes in U12-dependent spliceosomes. Within the minor spliceosome, which acts on U12-type introns, interacts with PPIL2 and RBM48. Core component of U2-type precatalytic, catalytic and postcatalytic spliceosomal complexes. Found in a mRNA splicing-dependent exon junction complex (EJC) with SRRM1. Interacts with U5 snRNP proteins SNRP116 and SNRNP40. Interacts with EFTUD2. Interacts (via the MPN (JAB/Mov34) domain) with PRPF3 ('Lys-63'-linked polyubiquitinated); may stabilize the U4/U6-U5 tri-snRNP complex. Interacts (via RNase H homology domain) with AAR2. Interacts with RPAP3 and URI1 in a ZNHIT2-dependent manner. Interacts with C9orf78. Interacts with SNRNP200; the interaction is direct. Interacts with TSSC4; the interaction is direct. As to expression, widely expressed.

Its subcellular location is the nucleus. It is found in the nucleus speckle. In terms of biological role, plays a role in pre-mRNA splicing as core component of precatalytic, catalytic and postcatalytic spliceosomal complexes, both of the predominant U2-type spliceosome and the minor U12-type spliceosome. Functions as a scaffold that mediates the ordered assembly of spliceosomal proteins and snRNAs. Required for the assembly of the U4/U6-U5 tri-snRNP complex, a building block of the spliceosome. Functions as a scaffold that positions spliceosomal U2, U5 and U6 snRNAs at splice sites on pre-mRNA substrates, so that splicing can occur. Interacts with both the 5' and the 3' splice site. The sequence is that of Pre-mRNA-processing-splicing factor 8 (PRPF8) from Homo sapiens (Human).